Reading from the N-terminus, the 818-residue chain is Dipeptidyl-peptidase 7 (818 aa).

An N-terminal signal peptide occupies residues 1-22 (MKLKRILLSVALLCGIGTTAMA). Catalysis depends on charge relay system residues His-87, Asp-223, and Ser-645.

Belongs to the peptidase S46 family.

Its function is as follows. Catalyzes the removal of dipeptides from the N-terminus of oligopeptides. Most efficiently cleaves the synthetic substrate Met-Leu-methylcoumaryl-7-amide (Met-Leu-MCA), and slowly hydrolyzes Leu-Gln-, Lys-Ala-, Leu-Arg, and Ala-Asn-MCA. Is likely involved in amino acid metabolism and bacterial growth/survival of asaccharolytic P.endodontalis, that utilizes amino acids from extracellular proteinaceous nutrients as energy and carbon sources. This Porphyromonas endodontalis (strain ATCC 35406 / DSM 24491 / JCM 8526 / CCUG 16442 / BCRC 14492 / NCTC 13058 / HG 370) (Bacteroides endodontalis) protein is Dipeptidyl-peptidase 7.